A 274-amino-acid chain; its full sequence is Bis(5'-nucleosyl)-tetraphosphatase, symmetrical (274 aa).

The protein belongs to the Ap4A hydrolase family.

The catalysed reaction is P(1),P(4)-bis(5'-adenosyl) tetraphosphate + H2O = 2 ADP + 2 H(+). Its function is as follows. Hydrolyzes diadenosine 5',5'''-P1,P4-tetraphosphate to yield ADP. This is Bis(5'-nucleosyl)-tetraphosphatase, symmetrical from Shewanella sediminis (strain HAW-EB3).